The sequence spans 213 residues: Na(+)-translocating NADH-quinone reductase subunit D (213 aa).

Helical transmembrane passes span 22 to 42, 43 to 63, 77 to 97, 101 to 121, 131 to 151, and 183 to 203; these read LIAI…TTAL, TMGF…SLLR, IIIS…FFTI, LSVF…AESM, FLDG…ISII, and LGLM…IWIV.

Belongs to the NqrDE/RnfAE family. As to quaternary structure, composed of six subunits; NqrA, NqrB, NqrC, NqrD, NqrE and NqrF.

The protein localises to the cell inner membrane. It carries out the reaction a ubiquinone + n Na(+)(in) + NADH + H(+) = a ubiquinol + n Na(+)(out) + NAD(+). NQR complex catalyzes the reduction of ubiquinone-1 to ubiquinol by two successive reactions, coupled with the transport of Na(+) ions from the cytoplasm to the periplasm. NqrA to NqrE are probably involved in the second step, the conversion of ubisemiquinone to ubiquinol. The polypeptide is Na(+)-translocating NADH-quinone reductase subunit D (Chlamydia trachomatis serovar A (strain ATCC VR-571B / DSM 19440 / HAR-13)).